Consider the following 127-residue polypeptide: Gamma-synuclein (127 aa).

A run of 2 repeats spans residues 20-30 (EKTKQGVTEAA) and 31-41 (EKTKEGVMYVG). The tract at residues 20–67 (EKTKQGVTEAAEKTKEGVMYVGAKTKEGVVQSVTSVAEKTKEQANAVS) is 4 X 11 AA tandem repeats of [EGSA]-K-T-K-[EQ]-[GQ]-V-X(4). A 3; approximate repeat occupies 42–56 (AKTKEGVVQSVTSVA). Copy 4 of the repeat occupies 57–67 (EKTKEQANAVS). A phosphoserine mark is found at S67, S72, and S124. The disordered stretch occupies residues 99–127 (ALKQPVPSQEDEAAKAEEQVAEETKSGGD). Over residues 110 to 127 (EAAKAEEQVAEETKSGGD) the composition is skewed to basic and acidic residues.

It belongs to the synuclein family. As to quaternary structure, may be a centrosome-associated protein. Interacts with MYOC; affects its secretion and its aggregation. Post-translationally, phosphorylated by BARK1 and GRK5. As to expression, predominantly expressed in retina (predominantly in outer nuclear layer, also in inner segment of photoreceptor cells, some individual cells located in the inner nuclear layer, inner plexiform layer and in nerve fiber layer). Also found in brain and heart.

Its subcellular location is the cytoplasm. The protein localises to the perinuclear region. It localises to the cytoskeleton. The protein resides in the microtubule organizing center. It is found in the centrosome. Its subcellular location is the spindle. Functionally, plays a role in neurofilament network integrity. May be involved in modulating axonal architecture during development and in the adult. In vitro, increases the susceptibility of neurofilament-H to calcium-dependent proteases. May also function in modulating the keratin network in skin. Activates the MAPK and Elk-1 signal transduction pathway. This Bos taurus (Bovine) protein is Gamma-synuclein (SNCG).